The following is a 912-amino-acid chain: Protein translocase subunit SecA (912 aa).

ATP is bound by residues Q87, 105–109 (GEGKT), and D509. Positions 847–859 (RERAVSQPVHEDA) are enriched in basic and acidic residues. Positions 847–912 (RERAVSQPVH…KYKHCHGKLN (66 aa)) are disordered. The span at 867-878 (AESEEASGESAD) shows a compositional bias: acidic residues. Basic and acidic residues predominate over residues 881-892 (QPVRRDGPKVGR). Residues C896, C898, C907, and H908 each coordinate Zn(2+). Over residues 902 to 912 (KKYKHCHGKLN) the composition is skewed to basic residues.

Belongs to the SecA family. In terms of assembly, monomer and homodimer. Part of the essential Sec protein translocation apparatus which comprises SecA, SecYEG and auxiliary proteins SecDF-YajC and YidC. Zn(2+) serves as cofactor.

It localises to the cell inner membrane. Its subcellular location is the cytoplasm. The enzyme catalyses ATP + H2O + cellular proteinSide 1 = ADP + phosphate + cellular proteinSide 2.. In terms of biological role, part of the Sec protein translocase complex. Interacts with the SecYEG preprotein conducting channel. Has a central role in coupling the hydrolysis of ATP to the transfer of proteins into and across the cell membrane, serving both as a receptor for the preprotein-SecB complex and as an ATP-driven molecular motor driving the stepwise translocation of polypeptide chains across the membrane. This chain is Protein translocase subunit SecA, found in Chromohalobacter salexigens (strain ATCC BAA-138 / DSM 3043 / CIP 106854 / NCIMB 13768 / 1H11).